A 708-amino-acid polypeptide reads, in one-letter code: Glycogen [starch] synthase isoform 1 (708 aa).

Residue R20 coordinates UDP. S159 carries the phosphoserine modification. Residues H193 and R199 each coordinate UDP-alpha-D-glucose. Residues H280, E281, Q283, H286, and K290 each coordinate alpha-D-glucose 6-phosphate. R320 contacts UDP. R320 contributes to the UDP-alpha-D-glucose binding site. S363 carries the phosphoserine modification. Position 500 (H500) interacts with alpha-D-glucose 6-phosphate. Residues E509, W511, and G512 each coordinate UDP-alpha-D-glucose. UDP is bound at residue T514. S560 bears the Phosphoserine mark. The alpha-D-glucose 6-phosphate site is built by R583 and R587. 2 positions are modified to phosphoserine: S651 and S655. 2 positions are modified to phosphoserine; by PKA: S660 and S662. Residues 687–708 (STNGAIDNDDDDNDTSAYYEDN) are disordered. The segment covering 693–708 (DNDDDDNDTSAYYEDN) has biased composition (acidic residues).

It belongs to the glycosyltransferase 3 family.

It carries out the reaction [(1-&gt;4)-alpha-D-glucosyl](n) + UDP-alpha-D-glucose = [(1-&gt;4)-alpha-D-glucosyl](n+1) + UDP + H(+). The protein operates within glycan biosynthesis; glycogen biosynthesis. With respect to regulation, allosteric activation by glucose-6-phosphate, and phosphorylation by a cAMP-dependent kinase. Glycogen synthase participates in the glycogen biosynthetic process along with glycogenin and glycogen branching enzyme. Extends the primer composed of a few glucose units formed by glycogenin by adding new glucose units to it. In this context, glycogen synthase transfers the glycosyl residue from UDP-Glc to the non-reducing end of alpha-1,4-glucan. The sequence is that of Glycogen [starch] synthase isoform 1 (GSY1) from Saccharomyces cerevisiae (strain ATCC 204508 / S288c) (Baker's yeast).